We begin with the raw amino-acid sequence, 298 residues long: Specificity protein transcription factor 1 (298 aa).

The segment covering 206–218 has biased composition (low complexity); the sequence is VSSGSESVSARGT. Positions 206-233 are disordered; that stretch reads VSSGSESVSARGTSGSGGTGKYPSSRTA. Residues 260–284 form a C2H2-type zinc finger; it reads HNCHIAGCGKVYNKSSHLKAHLRWH.

It belongs to the Sp1 C2H2-type zinc-finger protein family. In terms of tissue distribution, expressed in ASJ sensory neurons, pharyngeal cells, rectal cells, intestine, seam cells, and vulval cells.

Functionally, probable transcription factor which modulates gene expression, thereby acting as an ASJ sensory neuron terminal selector gene. This chain is Specificity protein transcription factor 1, found in Caenorhabditis elegans.